A 493-amino-acid chain; its full sequence is Lysine--tRNA ligase (493 aa).

2 residues coordinate Mg(2+): Glu-400 and Glu-407.

This sequence belongs to the class-II aminoacyl-tRNA synthetase family. In terms of assembly, homodimer. It depends on Mg(2+) as a cofactor.

Its subcellular location is the cytoplasm. The enzyme catalyses tRNA(Lys) + L-lysine + ATP = L-lysyl-tRNA(Lys) + AMP + diphosphate. This chain is Lysine--tRNA ligase, found in Syntrophomonas wolfei subsp. wolfei (strain DSM 2245B / Goettingen).